We begin with the raw amino-acid sequence, 150 residues long: Cytochrome c-type biogenesis protein CcmE (150 aa).

Over 1 to 9 the chain is Cytoplasmic; that stretch reads MRNLKKTRR. The chain crosses the membrane as a helical; Signal-anchor for type II membrane protein span at residues 10–30; sequence IQILLVAGGALVLSTALIGYG. The Periplasmic segment spans residues 31 to 150; sequence MRDGINFFRA…VYRDPAQPEG (120 aa). Heme contacts are provided by His-123 and Tyr-127.

It belongs to the CcmE/CycJ family.

Its subcellular location is the cell inner membrane. Functionally, heme chaperone required for the biogenesis of c-type cytochromes. Transiently binds heme delivered by CcmC and transfers the heme to apo-cytochromes in a process facilitated by CcmF and CcmH. The sequence is that of Cytochrome c-type biogenesis protein CcmE from Rhodobacter capsulatus (strain ATCC BAA-309 / NBRC 16581 / SB1003).